The primary structure comprises 61 residues: Large ribosomal subunit protein bL28 (61 aa).

The segment at M1–R26 is disordered.

This sequence belongs to the bacterial ribosomal protein bL28 family.

In Pediococcus pentosaceus (strain ATCC 25745 / CCUG 21536 / LMG 10740 / 183-1w), this protein is Large ribosomal subunit protein bL28.